A 760-amino-acid chain; its full sequence is Xaa-Pro dipeptidyl-peptidase (760 aa).

Residues Ser-349, Asp-469, and His-499 each act as charge relay system in the active site.

This sequence belongs to the peptidase S15 family. As to quaternary structure, homodimer.

It is found in the cytoplasm. It catalyses the reaction Hydrolyzes Xaa-Pro-|- bonds to release unblocked, N-terminal dipeptides from substrates including Ala-Pro-|-p-nitroanilide and (sequentially) Tyr-Pro-|-Phe-Pro-|-Gly-Pro-|-Ile.. In terms of biological role, removes N-terminal dipeptides sequentially from polypeptides having unsubstituted N-termini provided that the penultimate residue is proline. In Streptococcus pyogenes serotype M28 (strain MGAS6180), this protein is Xaa-Pro dipeptidyl-peptidase.